Consider the following 201-residue polypeptide: MKNAFFVTASIACGKSTFIEIANSLGFKSISADKIAHKILDENALELEKIFSPFNLKNLLTKEKKIDRKILGEIVFNNKEAKKTLENFTHPKIRAKILEQMQILDKENKAFFVEIPLFFESGAYENLGKVIVIYTPKELSLKRIMQRDKLSLEAAKVRLDSQIDIEEKLKKADFIIKNTNSYVDFRQECVKVIQEISKGKM.

A DPCK domain is found at 4–201 (AFFVTASIAC…VIQEISKGKM (198 aa)). Residue 12 to 17 (ACGKST) participates in ATP binding.

The protein belongs to the CoaE family.

It is found in the cytoplasm. It catalyses the reaction 3'-dephospho-CoA + ATP = ADP + CoA + H(+). Its pathway is cofactor biosynthesis; coenzyme A biosynthesis; CoA from (R)-pantothenate: step 5/5. In terms of biological role, catalyzes the phosphorylation of the 3'-hydroxyl group of dephosphocoenzyme A to form coenzyme A. In Campylobacter jejuni (strain RM1221), this protein is Dephospho-CoA kinase.